We begin with the raw amino-acid sequence, 153 residues long: Superoxide dismutase [Cu-Zn] (153 aa).

Cu cation is bound by residues H45 and H47. A Phosphothreonine modification is found at T53. C56 and C145 are disulfide-bonded. S59 is modified (phosphoserine). H62 contributes to the Cu cation binding site. Residues H62, H70, H79, and D82 each coordinate Zn(2+). Position 119 (H119) interacts with Cu cation.

It belongs to the Cu-Zn superoxide dismutase family. As to quaternary structure, homodimer. It depends on Cu cation as a cofactor. Requires Zn(2+) as cofactor.

The protein resides in the cytoplasm. It catalyses the reaction 2 superoxide + 2 H(+) = H2O2 + O2. Functionally, destroys radicals which are normally produced within the cells and which are toxic to biological systems. In Drosophila melanogaster (Fruit fly), this protein is Superoxide dismutase [Cu-Zn].